Here is an 88-residue protein sequence, read N- to C-terminus: Small ribosomal subunit protein bS20 (88 aa).

Belongs to the bacterial ribosomal protein bS20 family.

In terms of biological role, binds directly to 16S ribosomal RNA. This is Small ribosomal subunit protein bS20 from Blochmanniella floridana.